Here is a 356-residue protein sequence, read N- to C-terminus: Histidinol-phosphate aminotransferase (356 aa).

At Lys-214 the chain carries N6-(pyridoxal phosphate)lysine.

This sequence belongs to the class-II pyridoxal-phosphate-dependent aminotransferase family. Histidinol-phosphate aminotransferase subfamily. Homodimer. Pyridoxal 5'-phosphate serves as cofactor.

It catalyses the reaction L-histidinol phosphate + 2-oxoglutarate = 3-(imidazol-4-yl)-2-oxopropyl phosphate + L-glutamate. It participates in amino-acid biosynthesis; L-histidine biosynthesis; L-histidine from 5-phospho-alpha-D-ribose 1-diphosphate: step 7/9. The sequence is that of Histidinol-phosphate aminotransferase from Escherichia coli (strain SMS-3-5 / SECEC).